The primary structure comprises 293 residues: Thiamine-monophosphate kinase (293 aa).

Mg(2+) contacts are provided by Glu-25, Val-39, Asp-40, Asp-68, and Asp-113. Residues Gly-112–Asp-113 and Arg-136 contribute to the ATP site. A Mg(2+)-binding site is contributed by Asp-194. ATP is bound at residue Ser-196. Residue Asp-197 participates in Mg(2+) binding. Residues Glu-243 and Trp-286 each coordinate substrate.

Belongs to the thiamine-monophosphate kinase family. In terms of assembly, homodimer.

The catalysed reaction is thiamine phosphate + ATP = thiamine diphosphate + ADP. Its pathway is cofactor biosynthesis; thiamine diphosphate biosynthesis; thiamine diphosphate from thiamine phosphate: step 1/1. With respect to regulation, is inhibited by AMP; the mode of AMP inhibition is uncompetitive for both TMP and ATP. Its function is as follows. Catalyzes the ATP-dependent phosphorylation of thiamine-monophosphate (TMP) to form thiamine-pyrophosphate (TPP), the active form of vitamin B1. In Pyrobaculum calidifontis (strain DSM 21063 / JCM 11548 / VA1), this protein is Thiamine-monophosphate kinase.